The following is a 983-amino-acid chain: GPI ethanolamine phosphate transferase 2, catalytic subunit (983 aa).

Topologically, residues 1 to 431 (MRLGSGTFAT…SLSAQVAQYD (431 aa)) are lumenal. The N-linked (GlcNAc...) asparagine glycan is linked to Asn-194. 12 helical membrane-spanning segments follow: residues 432 to 452 (IYSM…LLLS), 471 to 491 (GFSL…VIVC), 506 to 526 (LAAG…VSVL), 552 to 572 (LLIL…SFVE), 699 to 719 (VLAA…CSPV), 721 to 741 (KAAL…IGSV), 752 to 772 (ISKG…ILFT), 789 to 809 (LKTV…ALLF), 812 to 832 (HNLP…KFIW), 879 to 899 (VEIP…VLWA), 919 to 939 (ACFC…VLVT), and 955 to 975 (LLYE…FTAM).

Belongs to the PIGG/PIGN/PIGO family. PIGG subfamily. As to quaternary structure, part of the ethanolamine phosphate transferase 2 complex composed by PIGG and PIGF. PIGF is required to stabilize it. Competes with PIGO for the binding of PIGF.

The protein localises to the endoplasmic reticulum membrane. It participates in glycolipid biosynthesis; glycosylphosphatidylinositol-anchor biosynthesis. In terms of biological role, catalytic subunit of the ethanolamine phosphate transferase 2 complex that transfers an ethanolamine phosphate (EtNP) from a phosphatidylethanolamine (PE) to the 6-OH position of the second alpha-1,6-linked mannose of a 6-PEtn-alpha-D-Man-(1-&gt;2)-alpha-D-Man-(1-&gt;6)-2-PEtn-alpha-D-Man-(1-&gt;4)-alpha-D-GlcN-(1-&gt;6)-(1-radyl,2-acyl-sn-glycero-3-phospho)-2-acyl-inositol (also termed H7) intermediate to generate a 6-PEtn-alpha-D-Man-(1-&gt;2)-6-PEtn-alpha-D-Man-(1-&gt;6)-2-PEtn-alpha-D-Man-(1-&gt;4)-alpha-D-GlcN-(1-&gt;6)-(1-radyl,2-acyl-sn-glycero-3-phospho)-2-acyl-inositol (also termed H8) and participates in the eleventh step of the glycosylphosphatidylinositol-anchor biosynthesis. This Homo sapiens (Human) protein is GPI ethanolamine phosphate transferase 2, catalytic subunit.